The chain runs to 71 residues: UPF0346 protein SPP_0954 (71 aa).

This sequence belongs to the UPF0346 family.

The protein is UPF0346 protein SPP_0954 of Streptococcus pneumoniae (strain P1031).